Consider the following 140-residue polypeptide: Nucleoside diphosphate kinase (140 aa).

6 residues coordinate ATP: K11, F59, R87, T93, R104, and N114. Catalysis depends on H117, which acts as the Pros-phosphohistidine intermediate.

Belongs to the NDK family. Homotetramer. Mg(2+) serves as cofactor.

It localises to the cytoplasm. The catalysed reaction is a 2'-deoxyribonucleoside 5'-diphosphate + ATP = a 2'-deoxyribonucleoside 5'-triphosphate + ADP. It carries out the reaction a ribonucleoside 5'-diphosphate + ATP = a ribonucleoside 5'-triphosphate + ADP. Functionally, major role in the synthesis of nucleoside triphosphates other than ATP. The ATP gamma phosphate is transferred to the NDP beta phosphate via a ping-pong mechanism, using a phosphorylated active-site intermediate. The sequence is that of Nucleoside diphosphate kinase from Rickettsia conorii (strain ATCC VR-613 / Malish 7).